A 192-amino-acid chain; its full sequence is Succinate dehydrogenase cytochrome b560 subunit, mitochondrial (192 aa).

A mitochondrion-targeting transit peptide spans 1 to 27 (MFGRTLNTFTSRNAPLVRNFDKFIVNN). Residues 48–83 (YSTQAKKPFTITEKRIDELKTPYQPTSPHLTIYKFP) are Mitochondrial matrix-facing. A helical membrane pass occupies residues 84-113 (LPAVMSIMHRATGICLALGITGLAGVTLFA). The Mitochondrial intermembrane segment spans residues 114–131 (PHDAIHYIQLLHTQYPAL). A helical transmembrane segment spans residues 132–156 (VYPAKFAVALPLTYHFCTGVRHIIW). His-146 serves as a coordination point for heme b. Over 157–164 (DETVKGLS) the chain is Mitochondrial matrix. The helical transmembrane segment at 165–186 (ISQIESSGKVLLAVVAVLSTIF) threads the bilayer. Residues 187–189 (TFV) lie on the Mitochondrial intermembrane side of the membrane.

It belongs to the cytochrome b560 family. As to quaternary structure, component of complex II composed of four subunits: the flavoprotein (FP) sdha, iron-sulfur protein (IP) sdhb, and a cytochrome b560 composed of sdhc and sdhd. It depends on heme b as a cofactor.

Its subcellular location is the mitochondrion inner membrane. Its pathway is carbohydrate metabolism; tricarboxylic acid cycle. Functionally, membrane-anchoring subunit of succinate dehydrogenase (SDH) that is involved in complex II of the mitochondrial electron transport chain and is responsible for transferring electrons from succinate to ubiquinone (coenzyme Q). This Dictyostelium discoideum (Social amoeba) protein is Succinate dehydrogenase cytochrome b560 subunit, mitochondrial (sdhC).